We begin with the raw amino-acid sequence, 233 residues long: MTADPRLIVPLDLPTVDDARAMVERLGDAVSFYKIGLELLASDGMGLAHDLKASGKSIFLDWKLHDIGATVERSARVLATSGCDLLTVHAEPQVMQAAVKARGDSSLKILAVTVLTSLTDADLVEMGYAFTARDLVERRVRQALACGVDGIVSSPHEAALAREIANDAGQPEFLIVTPGVRPEWSAKNDQARAATPADALRAGATHLVCGRPITAANDPREAALKVVTEMAGI.

Substrate is bound by residues D12, K34, 61 to 70 (DWKLHDIGAT), T116, R181, Q190, G210, and R211. The active-site Proton donor is the K63.

Belongs to the OMP decarboxylase family. Type 1 subfamily. Homodimer.

It carries out the reaction orotidine 5'-phosphate + H(+) = UMP + CO2. Its pathway is pyrimidine metabolism; UMP biosynthesis via de novo pathway; UMP from orotate: step 2/2. Functionally, catalyzes the decarboxylation of orotidine 5'-monophosphate (OMP) to uridine 5'-monophosphate (UMP). This is Orotidine 5'-phosphate decarboxylase from Caulobacter vibrioides (strain ATCC 19089 / CIP 103742 / CB 15) (Caulobacter crescentus).